The following is a 526-amino-acid chain: Na(+)/H(+) antiporter NhaB (526 aa).

Helical transmembrane passes span 13 to 33 (FLGQSPDWYKLAILVFLVVNP), 98 to 118 (LLLIFMVAGIYFMKQLLLFVF), 133 to 155 (LAFCFAAALLSAFLDALTVVAVV), 208 to 228 (LLMHAGVGTALGGVMTMVGEP), 244 to 264 (FFLRMAPVTLPVFACGLLVCL), 309 to 329 (ALIGIWLVVALAFHLAEVGLI), 355 to 375 (EALPFTALLTVFFTVVAVIIE), 395 to 415 (LALFYLFNGLLSSVSDNVFVG), 452 to 472 (VATPNGQAAFLFLLTSALAPL), and 481 to 501 (VWMALPYTVVLTLVGLLCVQF).

Belongs to the NhaB Na(+)/H(+) (TC 2.A.34) antiporter family.

It is found in the cell inner membrane. It carries out the reaction 2 Na(+)(in) + 3 H(+)(out) = 2 Na(+)(out) + 3 H(+)(in). Its function is as follows. Na(+)/H(+) antiporter that extrudes sodium in exchange for external protons. This is Na(+)/H(+) antiporter NhaB from Serratia proteamaculans (strain 568).